The chain runs to 414 residues: L-cysteine:1D-myo-inositol 2-amino-2-deoxy-alpha-D-glucopyranoside ligase (414 aa).

Cys-44 contacts Zn(2+). Residues 44-47, Thr-59, and 82-84 each bind L-cysteinyl-5'-AMP; these read CGIT and NIT. Residues 46–56 carry the 'HIGH' region motif; sequence ITPYDSTHLGH. The 'ERGGDP' region motif lies at 188–193; that stretch reads ERGGDP. Trp-228 provides a ligand contact to L-cysteinyl-5'-AMP. Cys-232 serves as a coordination point for Zn(2+). 250-252 is a binding site for L-cysteinyl-5'-AMP; it reads GSD. Residue His-257 participates in Zn(2+) binding. L-cysteinyl-5'-AMP is bound at residue Ile-284. Positions 290–294 match the 'KMSKS' region motif; it reads KMSKS.

It belongs to the class-I aminoacyl-tRNA synthetase family. MshC subfamily. Monomer. The cofactor is Zn(2+).

It carries out the reaction 1D-myo-inositol 2-amino-2-deoxy-alpha-D-glucopyranoside + L-cysteine + ATP = 1D-myo-inositol 2-(L-cysteinylamino)-2-deoxy-alpha-D-glucopyranoside + AMP + diphosphate + H(+). In terms of biological role, catalyzes the ATP-dependent condensation of GlcN-Ins and L-cysteine to form L-Cys-GlcN-Ins. This is L-cysteine:1D-myo-inositol 2-amino-2-deoxy-alpha-D-glucopyranoside ligase (mshC) from Corynebacterium diphtheriae (strain ATCC 700971 / NCTC 13129 / Biotype gravis).